The sequence spans 348 residues: Fasciculation and elongation protein zeta-2 (348 aa).

The interval 11–40 (YEFQEPAGSVQEQENCNASPEAGAGAHAGG) is disordered. Phosphoserine occurs at positions 130, 171, and 190. The stretch at 206–280 (ERVKRLSVSE…TAKKKKKLKS (75 aa)) forms a coiled coil. Residues 265–296 (QKEHKETAKKKKKLKSGSSQNGRSERSHMPGT) are disordered.

Belongs to the zygin family. In terms of assembly, homodimer; disulfide-linked. May form heterodimers with FEZ1. Interacts with synaptotagmin.

In terms of biological role, involved in axonal outgrowth and fasciculation. This Mus musculus (Mouse) protein is Fasciculation and elongation protein zeta-2 (Fez2).